The following is a 231-amino-acid chain: Probable GTP-binding protein EngB (231 aa).

The EngB-type G domain occupies 51-231 (DLSEIAFAGR…RAQLAALASP (181 aa)). Residues 59–66 (GRSNVGKS), 86–90 (GRTQE), 109–112 (DLPG), 176–179 (TKAD), and 210–212 (TSS) contribute to the GTP site. Serine 66 and threonine 88 together coordinate Mg(2+).

This sequence belongs to the TRAFAC class TrmE-Era-EngA-EngB-Septin-like GTPase superfamily. EngB GTPase family. The cofactor is Mg(2+).

In terms of biological role, necessary for normal cell division and for the maintenance of normal septation. This chain is Probable GTP-binding protein EngB, found in Rhodospirillum rubrum (strain ATCC 11170 / ATH 1.1.1 / DSM 467 / LMG 4362 / NCIMB 8255 / S1).